A 250-amino-acid polypeptide reads, in one-letter code: 2,3-bisphosphoglycerate-dependent phosphoglycerate mutase (250 aa).

Residues 10-17 (RHGESQWN), 23-24 (TG), Arg62, 89-92 (ERHY), Lys100, 116-117 (RR), and 185-186 (GN) contribute to the substrate site. His11 serves as the catalytic Tele-phosphohistidine intermediate. Glu89 acts as the Proton donor/acceptor in catalysis.

The protein belongs to the phosphoglycerate mutase family. BPG-dependent PGAM subfamily. In terms of assembly, homodimer.

The enzyme catalyses (2R)-2-phosphoglycerate = (2R)-3-phosphoglycerate. The protein operates within carbohydrate degradation; glycolysis; pyruvate from D-glyceraldehyde 3-phosphate: step 3/5. Catalyzes the interconversion of 2-phosphoglycerate and 3-phosphoglycerate. This Pectobacterium carotovorum subsp. carotovorum (strain PC1) protein is 2,3-bisphosphoglycerate-dependent phosphoglycerate mutase.